The primary structure comprises 150 residues: MAKKPRVTKLNTDRRSRANERERQRVSEMNGMFDVLLNLLPPSHFKTRLSRVQILREATSYIIRLHNFLIESSNSDIDAITVFPHIFNGERKSNKDAIRRPMKLKQGGGVAAFISRHELPPLQLPNPVIPILKPTSVPVWPQTNVYIAYF.

Residues 1–24 (MAKKPRVTKLNTDRRSRANERERQ) form a disordered region. A compositionally biased stretch (basic and acidic residues) spans 11-24 (NTDRRSRANERERQ). Residues 13 to 26 (DRRSRANERERQRV) are basic motif. Residues 13–65 (DRRSRANERERQRVSEMNGMFDVLLNLLPPSHFKTRLSRVQILREATSYIIRL) enclose the bHLH domain. Residues 27 to 65 (SEMNGMFDVLLNLLPPSHFKTRLSRVQILREATSYIIRL) are helix-loop-helix motif.

As to quaternary structure, forms a heterodimer with helix-loop-helix protein hlh-2.

The protein localises to the nucleus. Its function is as follows. Transcription factor which binds the E box motif 5'-GCAGGTG-3'. Involved in migration of the gonadal leader cells; distal tip cells (DTCs) in hermaphrodites, and linker cells in males. Positively regulates expression of alpha integrin ina-1 and ADAMTS protease gon-1. The chain is Helix-loop-helix protein hlh-12 from Caenorhabditis elegans.